The primary structure comprises 408 residues: MVQVNSNYLKLKAGYLFPEIARRIKSFSEANPDAALIRLGIGDVTEPLPLACRNAMKVAIDEMGTNTGFHGYGPEQGYDWLRKAIAKHDFQTKGCQINAEEIFVSDGSKCDSSNILDILGSSNRIAVTDPVYPVYVDSNVMAGRTGDANQSGRYAGLSYLPINAENGFAAKIPSEPVDLIYLCFPNNPTGAVATRAQLQEWVNYARTNSVLILFDAAYEAFIQNPDLPHSIYEIEGARECAIEFRSFSKNAGFTGTRCAFTVVPKGLKGKSDDGSDVELWNLWNRRQSTKFNGVSYIIQRGAEAVYSAQGQGEINALVSFYMRNAAIIRRELTAAGIEVHGGEHAPYVWLKTPDDMDSWGFFDHLLQNAHVVGTPGSGFGAAGEGYFRLSAFNSRVNVDEAMRRIRAL.

Positions 15 and 42 each coordinate substrate. Pyridoxal 5'-phosphate is bound by residues tyrosine 72, 108 to 109 (SK), tyrosine 132, asparagine 187, tyrosine 218, and 246 to 248 (SFS). 3 residues coordinate substrate: lysine 109, tyrosine 132, and asparagine 187. Position 249 is an N6-(pyridoxal phosphate)lysine (lysine 249). Pyridoxal 5'-phosphate contacts are provided by arginine 257 and asparagine 292. Positions 292 and 388 each coordinate substrate.

This sequence belongs to the class-I pyridoxal-phosphate-dependent aminotransferase family. LL-diaminopimelate aminotransferase subfamily. Homodimer. The cofactor is pyridoxal 5'-phosphate.

The enzyme catalyses (2S,6S)-2,6-diaminopimelate + 2-oxoglutarate = (S)-2,3,4,5-tetrahydrodipicolinate + L-glutamate + H2O + H(+). It functions in the pathway amino-acid biosynthesis; L-lysine biosynthesis via DAP pathway; LL-2,6-diaminopimelate from (S)-tetrahydrodipicolinate (aminotransferase route): step 1/1. Functionally, involved in the synthesis of meso-diaminopimelate (m-DAP or DL-DAP), required for both lysine and peptidoglycan biosynthesis. Catalyzes the direct conversion of tetrahydrodipicolinate to LL-diaminopimelate. The protein is LL-diaminopimelate aminotransferase of Prochlorococcus marinus (strain MIT 9313).